The following is a 195-amino-acid chain: Heavy metal-associated isoprenylated plant protein 18 (195 aa).

Disordered regions lie at residues 36 to 76 (DVVQ…KPET) and 145 to 172 (EKEKKDDEPITKDEENEIDRGVYMNPSS). Basic and acidic residues-rich tracts occupy residues 47-76 (TVTKKNEEGDIVDKKDETPEVEEKIDKPET) and 145-157 (EKEKKDDEPITKD). In terms of domain architecture, HMA spans 78 to 149 (TRKLEIHIAF…RIVKMEKEKK (72 aa)). C192 is modified (cysteine methyl ester). Residue C192 is the site of S-farnesyl cysteine attachment. The propeptide at 193-195 (SIS) is removed in mature form.

Belongs to the HIPP family.

Functionally, probable heavy-metal-binding protein. Required for female gametophyte development and function. This chain is Heavy metal-associated isoprenylated plant protein 18, found in Arabidopsis thaliana (Mouse-ear cress).